Here is a 452-residue protein sequence, read N- to C-terminus: Pup--protein ligase (452 aa).

Position 9 (Glu9) interacts with Mg(2+). ATP is bound at residue Arg53. Residue Tyr55 coordinates Mg(2+). Asp57 serves as the catalytic Proton acceptor. A Mg(2+)-binding site is contributed by Glu63. ATP-binding residues include Thr66 and Trp419.

It belongs to the Pup ligase/Pup deamidase family. Pup-conjugating enzyme subfamily. Post-translationally, pupylated at an undetermined lysine residue by the prokaryotic ubiquitin-like protein Pup, which leads to its degradation by the proteasome and thereby constitutes a negative auto-regulation.

The enzyme catalyses ATP + [prokaryotic ubiquitin-like protein]-L-glutamate + [protein]-L-lysine = ADP + phosphate + N(6)-([prokaryotic ubiquitin-like protein]-gamma-L-glutamyl)-[protein]-L-lysine.. The protein operates within protein degradation; proteasomal Pup-dependent pathway. Its pathway is protein modification; protein pupylation. Functionally, catalyzes the covalent attachment of the prokaryotic ubiquitin-like protein modifier Pup to the proteasomal substrate proteins, thereby targeting them for proteasomal degradation. This tagging system is termed pupylation. The ligation reaction likely involves the side-chain carboxylate of the C-terminal glutamate of Pup and the side-chain amino group of a substrate lysine. The sequence is that of Pup--protein ligase (pafA) from Mycolicibacterium smegmatis (strain ATCC 700084 / mc(2)155) (Mycobacterium smegmatis).